Here is a 219-residue protein sequence, read N- to C-terminus: Orotate phosphoribosyltransferase (219 aa).

Lys26 contacts 5-phospho-alpha-D-ribose 1-diphosphate. 34–35 (FF) contacts orotate. 5-phospho-alpha-D-ribose 1-diphosphate-binding positions include 72–73 (YK), Arg98, Lys99, Lys102, His104, and 124–132 (DDVITAGTA). Thr128 and Arg156 together coordinate orotate.

Belongs to the purine/pyrimidine phosphoribosyltransferase family. PyrE subfamily. In terms of assembly, homodimer. Mg(2+) is required as a cofactor.

The enzyme catalyses orotidine 5'-phosphate + diphosphate = orotate + 5-phospho-alpha-D-ribose 1-diphosphate. It participates in pyrimidine metabolism; UMP biosynthesis via de novo pathway; UMP from orotate: step 1/2. Functionally, catalyzes the transfer of a ribosyl phosphate group from 5-phosphoribose 1-diphosphate to orotate, leading to the formation of orotidine monophosphate (OMP). The sequence is that of Orotate phosphoribosyltransferase from Xanthomonas euvesicatoria pv. vesicatoria (strain 85-10) (Xanthomonas campestris pv. vesicatoria).